A 493-amino-acid polypeptide reads, in one-letter code: Cytochrome P450 2E1 (493 aa).

298–303 is a binding site for substrate; it reads FAGTET. Cysteine 437 provides a ligand contact to heme.

It belongs to the cytochrome P450 family. Interacts with chaperones HSP70 and HSP90; this interaction is required for initial targeting to mitochondria. It depends on heme as a cofactor.

The protein resides in the endoplasmic reticulum membrane. Its subcellular location is the microsome membrane. It localises to the mitochondrion inner membrane. It carries out the reaction an organic molecule + reduced [NADPH--hemoprotein reductase] + O2 = an alcohol + oxidized [NADPH--hemoprotein reductase] + H2O + H(+). The catalysed reaction is (5Z,8Z,11Z)-eicosatrienoate + reduced [NADPH--hemoprotein reductase] + O2 = 19-hydroxy-(5Z,8Z,11Z)-eicosatrienoate + oxidized [NADPH--hemoprotein reductase] + H2O + H(+). The enzyme catalyses (5Z,8Z,11Z,14Z,17Z)-eicosapentaenoate + reduced [NADPH--hemoprotein reductase] + O2 = 19-hydroxy-(5Z,8Z,11Z,14Z,17Z)-eicosapentaenoate + oxidized [NADPH--hemoprotein reductase] + H2O + H(+). It catalyses the reaction (4Z,7Z,10Z,13Z,16Z,19Z)-docosahexaenoate + reduced [NADPH--hemoprotein reductase] + O2 = 21-hydroxy-(4Z,7Z,10Z,13Z,16Z,19Z)-docosahexaenoate + oxidized [NADPH--hemoprotein reductase] + H2O + H(+). It carries out the reaction dodecanoate + reduced [NADPH--hemoprotein reductase] + O2 = 11-hydroxydodecanoate + oxidized [NADPH--hemoprotein reductase] + H2O + H(+). The catalysed reaction is tetradecanoate + reduced [NADPH--hemoprotein reductase] + O2 = 13-hydroxytetradecanoate + oxidized [NADPH--hemoprotein reductase] + H2O + H(+). The enzyme catalyses 4-nitrophenol + NADPH + O2 + H(+) = 4-nitrocatechol + NADP(+) + H2O. It functions in the pathway lipid metabolism; fatty acid metabolism. The omega-1 hydroxylase activity is stimulated by cytochrome b5. Its function is as follows. A cytochrome P450 monooxygenase involved in the metabolism of fatty acids. Mechanistically, uses molecular oxygen inserting one oxygen atom into a substrate, and reducing the second into a water molecule, with two electrons provided by NADPH via cytochrome P450 reductase (NADPH--hemoprotein reductase). Catalyzes the hydroxylation of carbon-hydrogen bonds. Hydroxylates fatty acids specifically at the omega-1 position displaying the highest catalytic activity for saturated fatty acids. May be involved in the oxidative metabolism of xenobiotics. The sequence is that of Cytochrome P450 2E1 (CYP2E1) from Oryctolagus cuniculus (Rabbit).